The chain runs to 244 residues: NAD(P)H-quinone oxidoreductase subunit K (244 aa).

Positions 60, 61, 125, and 156 each coordinate [4Fe-4S] cluster.

The protein belongs to the complex I 20 kDa subunit family. NDH-1 can be composed of about 15 different subunits; different subcomplexes with different compositions have been identified which probably have different functions. The cofactor is [4Fe-4S] cluster.

Its subcellular location is the cellular thylakoid membrane. It carries out the reaction a plastoquinone + NADH + (n+1) H(+)(in) = a plastoquinol + NAD(+) + n H(+)(out). The catalysed reaction is a plastoquinone + NADPH + (n+1) H(+)(in) = a plastoquinol + NADP(+) + n H(+)(out). In terms of biological role, NDH-1 shuttles electrons from an unknown electron donor, via FMN and iron-sulfur (Fe-S) centers, to quinones in the respiratory and/or the photosynthetic chain. The immediate electron acceptor for the enzyme in this species is believed to be plastoquinone. Couples the redox reaction to proton translocation, and thus conserves the redox energy in a proton gradient. Cyanobacterial NDH-1 also plays a role in inorganic carbon-concentration. The protein is NAD(P)H-quinone oxidoreductase subunit K of Prochlorococcus marinus (strain MIT 9515).